The chain runs to 646 residues: Pentatricopeptide repeat-containing protein At5g48910 (646 aa).

The tract at residues 1–24 (MNPTQTLFSPGGNSPASSPASHPS) is disordered. Positions 9-24 (SPGGNSPASSPASHPS) are enriched in low complexity. PPR repeat units follow at residues 54–88 (DTLA…MPQR), 89–126 (NCFS…FVEP), 127–161 (NRFT…GFGG), 162–197 (DEFV…DMVV), 207–237 (EIVL…MRQR), 238–272 (SVVS…DIRP), 273–307 (NYVT…GIRI), 308–338 (DDVL…LPRE), 339–373 (NVIT…GVRP), 374–409 (SDVA…GLEP), and 410–440 (RIEH…MPIK). The type E motif stretch occupies residues 445 to 520 (IWKALLGACR…DPGCSLIDID (76 aa)). The segment at 521–551 (GVLHEFVVEDDSHPKAKEINSMLVEISDKLR) is type E(+) motif. Positions 552-646 (LAGYRPITTQ…DGSCSCMDYW (95 aa)) are type DYW motif.

The protein belongs to the PPR family. PCMP-H subfamily.

The polypeptide is Pentatricopeptide repeat-containing protein At5g48910 (PCMP-H38) (Arabidopsis thaliana (Mouse-ear cress)).